The sequence spans 474 residues: MGTIDIITSPTPIHILAFPFPAKGHINPLLHLCNRLASKGFKITLITTVSTLKSVKTSKANGIDIESIPDGIPQEQNHQIITVMEMNMELYFKQFKASAIENTTKLIQKLKTKNPPPKVLIYDSSMPWILEVAHEQGLLGASFFTQPCSVSAIYYHMLQGTIKLPLENSENGMVSLPYLPLLEKKDLPGVQQFEDNSEALAELLADQFSNIDDVDYVLFNTFDALEIEVVNWMGSKWPILTVGPTAPTSMFLLDKKQKNYEDGRSINYLFETNTEVCMKWLDQREIDTVIYVSFGSLASLTEEQMEQVSQALIRSNCYFLWVVREEEENKLPKDFKETTSKKKGLVINWCPQLDVLAHKSVACFMTHCGWNSTLEALCSGVPMICMPQWADQTTNAKLIEHVWKIGVGVNKSDENGIVKREDIEDCIRQVIESERGKELKRNAIKWKELAKEAVSEGGSSYNNIQEFSSSLLFN.

UDP-alpha-D-glucose-binding positions include Ser296, 349–350 (WC), 367–375 (HCGWNSTLE), and 389–392 (WADQ).

Belongs to the UDP-glycosyltransferase family.

The polypeptide is UDP glycosyltransferase 9 (Catharanthus roseus (Madagascar periwinkle)).